The following is a 155-amino-acid chain: Regulatory protein RecX (155 aa).

Belongs to the RecX family.

The protein localises to the cytoplasm. Modulates RecA activity. The protein is Regulatory protein RecX of Pseudomonas fluorescens (strain ATCC BAA-477 / NRRL B-23932 / Pf-5).